A 324-amino-acid polypeptide reads, in one-letter code: Anthranilate phosphoribosyltransferase (324 aa).

Residues Gly72, 75 to 76 (GD), Ser80, 82 to 85 (NVST), 99 to 107 (KHGNVSITS), and Ser111 contribute to the 5-phospho-alpha-D-ribose 1-diphosphate site. Gly72 contacts anthranilate. Residue Ser84 participates in Mg(2+) binding. Residue Asn102 coordinates anthranilate. Arg157 provides a ligand contact to anthranilate. Mg(2+)-binding residues include Asp215 and Glu216.

This sequence belongs to the anthranilate phosphoribosyltransferase family. As to quaternary structure, homodimer. It depends on Mg(2+) as a cofactor.

It carries out the reaction N-(5-phospho-beta-D-ribosyl)anthranilate + diphosphate = 5-phospho-alpha-D-ribose 1-diphosphate + anthranilate. It functions in the pathway amino-acid biosynthesis; L-tryptophan biosynthesis; L-tryptophan from chorismate: step 2/5. Its function is as follows. Catalyzes the transfer of the phosphoribosyl group of 5-phosphorylribose-1-pyrophosphate (PRPP) to anthranilate to yield N-(5'-phosphoribosyl)-anthranilate (PRA). The chain is Anthranilate phosphoribosyltransferase from Pyrococcus abyssi (strain GE5 / Orsay).